A 103-amino-acid chain; its full sequence is Small ribosomal subunit protein uS10 (103 aa).

This sequence belongs to the universal ribosomal protein uS10 family. Part of the 30S ribosomal subunit.

Functionally, involved in the binding of tRNA to the ribosomes. This chain is Small ribosomal subunit protein uS10, found in Polynucleobacter necessarius subsp. necessarius (strain STIR1).